We begin with the raw amino-acid sequence, 193 residues long: Holliday junction branch migration complex subunit RuvA (193 aa).

The tract at residues 1 to 64 is domain I; sequence MIGRIAGTLL…EDAHLLFGFA (64 aa). The segment at 65–144 is domain II; that stretch reads TATERNTFRE…DLGHAPGATP (80 aa). The flexible linker stretch occupies residues 145 to 151; sequence LADSAVD. The interval 151-193 is domain III; sequence DILNALLALGYSEKEAAQAIKQVPAGTGVSDGIKLALKALSKG.

This sequence belongs to the RuvA family. As to quaternary structure, homotetramer. Forms an RuvA(8)-RuvB(12)-Holliday junction (HJ) complex. HJ DNA is sandwiched between 2 RuvA tetramers; dsDNA enters through RuvA and exits via RuvB. An RuvB hexamer assembles on each DNA strand where it exits the tetramer. Each RuvB hexamer is contacted by two RuvA subunits (via domain III) on 2 adjacent RuvB subunits; this complex drives branch migration. In the full resolvosome a probable DNA-RuvA(4)-RuvB(12)-RuvC(2) complex forms which resolves the HJ.

The protein resides in the cytoplasm. The RuvA-RuvB-RuvC complex processes Holliday junction (HJ) DNA during genetic recombination and DNA repair, while the RuvA-RuvB complex plays an important role in the rescue of blocked DNA replication forks via replication fork reversal (RFR). RuvA specifically binds to HJ cruciform DNA, conferring on it an open structure. The RuvB hexamer acts as an ATP-dependent pump, pulling dsDNA into and through the RuvAB complex. HJ branch migration allows RuvC to scan DNA until it finds its consensus sequence, where it cleaves and resolves the cruciform DNA. This is Holliday junction branch migration complex subunit RuvA from Cupriavidus metallidurans (strain ATCC 43123 / DSM 2839 / NBRC 102507 / CH34) (Ralstonia metallidurans).